The sequence spans 159 residues: Nucleotide-binding protein PSPPH_4093 (159 aa).

The protein belongs to the YajQ family.

Functionally, nucleotide-binding protein. The sequence is that of Nucleotide-binding protein PSPPH_4093 from Pseudomonas savastanoi pv. phaseolicola (strain 1448A / Race 6) (Pseudomonas syringae pv. phaseolicola (strain 1448A / Race 6)).